A 130-amino-acid chain; its full sequence is UPF0251 protein Mevan_1492 (130 aa).

Belongs to the UPF0251 family.

The chain is UPF0251 protein Mevan_1492 from Methanococcus vannielii (strain ATCC 35089 / DSM 1224 / JCM 13029 / OCM 148 / SB).